The sequence spans 217 residues: Imidazole glycerol phosphate synthase subunit HisH (217 aa).

In terms of domain architecture, Glutamine amidotransferase type-1 spans Met-1 to Glu-212. Cys-79 (nucleophile) is an active-site residue. Residues His-187 and Glu-189 contribute to the active site.

In terms of assembly, heterodimer of HisH and HisF.

Its subcellular location is the cytoplasm. It carries out the reaction 5-[(5-phospho-1-deoxy-D-ribulos-1-ylimino)methylamino]-1-(5-phospho-beta-D-ribosyl)imidazole-4-carboxamide + L-glutamine = D-erythro-1-(imidazol-4-yl)glycerol 3-phosphate + 5-amino-1-(5-phospho-beta-D-ribosyl)imidazole-4-carboxamide + L-glutamate + H(+). It catalyses the reaction L-glutamine + H2O = L-glutamate + NH4(+). The protein operates within amino-acid biosynthesis; L-histidine biosynthesis; L-histidine from 5-phospho-alpha-D-ribose 1-diphosphate: step 5/9. In terms of biological role, IGPS catalyzes the conversion of PRFAR and glutamine to IGP, AICAR and glutamate. The HisH subunit catalyzes the hydrolysis of glutamine to glutamate and ammonia as part of the synthesis of IGP and AICAR. The resulting ammonia molecule is channeled to the active site of HisF. In Desulfovibrio desulfuricans (strain ATCC 27774 / DSM 6949 / MB), this protein is Imidazole glycerol phosphate synthase subunit HisH.